A 207-amino-acid polypeptide reads, in one-letter code: LexA repressor (207 aa).

The H-T-H motif DNA-binding region spans 28–48 (VREIGEAVGLASSSTVHGHLA). Residues Ser-129 and Lys-167 each act as for autocatalytic cleavage activity in the active site.

It belongs to the peptidase S24 family. As to quaternary structure, homodimer.

It carries out the reaction Hydrolysis of Ala-|-Gly bond in repressor LexA.. Its function is as follows. Represses a number of genes involved in the response to DNA damage (SOS response), including recA and lexA. In the presence of single-stranded DNA, RecA interacts with LexA causing an autocatalytic cleavage which disrupts the DNA-binding part of LexA, leading to derepression of the SOS regulon and eventually DNA repair. This Geobacillus sp. (strain WCH70) protein is LexA repressor.